Consider the following 559-residue polypeptide: Formate--tetrahydrofolate ligase (559 aa).

67-74 (TPAGEGKS) is an ATP binding site.

Belongs to the formate--tetrahydrofolate ligase family.

It carries out the reaction (6S)-5,6,7,8-tetrahydrofolate + formate + ATP = (6R)-10-formyltetrahydrofolate + ADP + phosphate. Its pathway is one-carbon metabolism; tetrahydrofolate interconversion. The sequence is that of Formate--tetrahydrofolate ligase from Lactobacillus delbrueckii subsp. bulgaricus (strain ATCC BAA-365 / Lb-18).